Consider the following 312-residue polypeptide: Glycerol-3-phosphate dehydrogenase [NAD(P)+] (312 aa).

Residues Trp11, Arg30, Arg31, and Lys95 each contribute to the NADPH site. Residues Lys95, Gly123, and Ser125 each contribute to the sn-glycerol 3-phosphate site. Residue Ala127 coordinates NADPH. Lys177, Asp230, Ser240, Arg241, and Asn242 together coordinate sn-glycerol 3-phosphate. The active-site Proton acceptor is Lys177. Arg241 is a binding site for NADPH. The NADPH site is built by Val265 and Glu267.

Belongs to the NAD-dependent glycerol-3-phosphate dehydrogenase family.

The protein localises to the cytoplasm. The enzyme catalyses sn-glycerol 3-phosphate + NAD(+) = dihydroxyacetone phosphate + NADH + H(+). It catalyses the reaction sn-glycerol 3-phosphate + NADP(+) = dihydroxyacetone phosphate + NADPH + H(+). It functions in the pathway membrane lipid metabolism; glycerophospholipid metabolism. Functionally, catalyzes the reduction of the glycolytic intermediate dihydroxyacetone phosphate (DHAP) to sn-glycerol 3-phosphate (G3P), the key precursor for phospholipid synthesis. This is Glycerol-3-phosphate dehydrogenase [NAD(P)+] from Helicobacter pylori (strain Shi470).